The primary structure comprises 222 residues: 3-dehydroquinate dehydratase (222 aa).

3-dehydroquinate-binding positions include 29–31 (ELR) and R55. Residue H112 is the Proton donor/acceptor of the active site. The active-site Schiff-base intermediate with substrate is K139. 3-dehydroquinate contacts are provided by R178, S199, and Q203.

The protein belongs to the type-I 3-dehydroquinase family. In terms of assembly, homodimer.

The enzyme catalyses 3-dehydroquinate = 3-dehydroshikimate + H2O. It functions in the pathway metabolic intermediate biosynthesis; chorismate biosynthesis; chorismate from D-erythrose 4-phosphate and phosphoenolpyruvate: step 3/7. Functionally, involved in the third step of the chorismate pathway, which leads to the biosynthesis of aromatic amino acids. Catalyzes the cis-dehydration of 3-dehydroquinate (DHQ) and introduces the first double bond of the aromatic ring to yield 3-dehydroshikimate. The protein is 3-dehydroquinate dehydratase of Dehalococcoides mccartyi (strain ATCC BAA-2100 / JCM 16839 / KCTC 5957 / BAV1).